Consider the following 84-residue polypeptide: DNA-directed RNA polymerase subunit Rpo5 (84 aa).

Belongs to the archaeal Rpo5/eukaryotic RPB5 RNA polymerase subunit family. As to quaternary structure, part of the RNA polymerase complex.

Its subcellular location is the cytoplasm. The enzyme catalyses RNA(n) + a ribonucleoside 5'-triphosphate = RNA(n+1) + diphosphate. Its function is as follows. DNA-dependent RNA polymerase (RNAP) catalyzes the transcription of DNA into RNA using the four ribonucleoside triphosphates as substrates. In Saccharolobus islandicus (strain Y.N.15.51 / Yellowstone #2) (Sulfolobus islandicus), this protein is DNA-directed RNA polymerase subunit Rpo5.